Consider the following 308-residue polypeptide: Protein translocase subunit SecF (308 aa).

A run of 6 helical transmembrane segments spans residues Ala18–Leu38, Gly134–Phe154, Leu160–Leu180, Thr193–Phe213, Ile244–Val264, and Leu272–Ile292.

The protein belongs to the SecD/SecF family. SecF subfamily. In terms of assembly, forms a complex with SecD. Part of the essential Sec protein translocation apparatus which comprises SecA, SecYEG and auxiliary proteins SecDF. Other proteins may also be involved.

Its subcellular location is the cell inner membrane. Its function is as follows. Part of the Sec protein translocase complex. Interacts with the SecYEG preprotein conducting channel. SecDF uses the proton motive force (PMF) to complete protein translocation after the ATP-dependent function of SecA. The protein is Protein translocase subunit SecF of Rhodothermus marinus (strain ATCC 43812 / DSM 4252 / R-10) (Rhodothermus obamensis).